Consider the following 203-residue polypeptide: Holliday junction branch migration complex subunit RuvA (203 aa).

Positions 1 to 64 are domain I; the sequence is MIGRLRGIIL…EDAQLLYGFN (64 aa). The tract at residues 65 to 142 is domain II; sequence NKQERTLFKE…KGLHGDLFTP (78 aa). Residues 143-154 form a flexible linker region; that stretch reads AADLVLTSPASP. Positions 155–203 are domain III; the sequence is ATDDAEQEAVAALVALGYKPQEASRMVSKIARPDASSETLIREALRAAL.

It belongs to the RuvA family. Homotetramer. Forms an RuvA(8)-RuvB(12)-Holliday junction (HJ) complex. HJ DNA is sandwiched between 2 RuvA tetramers; dsDNA enters through RuvA and exits via RuvB. An RuvB hexamer assembles on each DNA strand where it exits the tetramer. Each RuvB hexamer is contacted by two RuvA subunits (via domain III) on 2 adjacent RuvB subunits; this complex drives branch migration. In the full resolvosome a probable DNA-RuvA(4)-RuvB(12)-RuvC(2) complex forms which resolves the HJ.

Its subcellular location is the cytoplasm. Its function is as follows. The RuvA-RuvB-RuvC complex processes Holliday junction (HJ) DNA during genetic recombination and DNA repair, while the RuvA-RuvB complex plays an important role in the rescue of blocked DNA replication forks via replication fork reversal (RFR). RuvA specifically binds to HJ cruciform DNA, conferring on it an open structure. The RuvB hexamer acts as an ATP-dependent pump, pulling dsDNA into and through the RuvAB complex. HJ branch migration allows RuvC to scan DNA until it finds its consensus sequence, where it cleaves and resolves the cruciform DNA. The protein is Holliday junction branch migration complex subunit RuvA of Citrobacter koseri (strain ATCC BAA-895 / CDC 4225-83 / SGSC4696).